Consider the following 337-residue polypeptide: Quinolinate synthase (337 aa).

The iminosuccinate site is built by His40 and Ser57. Cys102 provides a ligand contact to [4Fe-4S] cluster. Residues 128 to 130 (YVN) and Ser145 each bind iminosuccinate. Cys189 contacts [4Fe-4S] cluster. Iminosuccinate is bound by residues 215 to 217 (HPE) and Thr243. A [4Fe-4S] cluster-binding site is contributed by Cys288.

It belongs to the quinolinate synthase family. Type 2 subfamily. It depends on [4Fe-4S] cluster as a cofactor.

It localises to the cytoplasm. It carries out the reaction iminosuccinate + dihydroxyacetone phosphate = quinolinate + phosphate + 2 H2O + H(+). It functions in the pathway cofactor biosynthesis; NAD(+) biosynthesis; quinolinate from iminoaspartate: step 1/1. Its function is as follows. Catalyzes the condensation of iminoaspartate with dihydroxyacetone phosphate to form quinolinate. This is Quinolinate synthase from Mycobacterium sp. (strain JLS).